We begin with the raw amino-acid sequence, 267 residues long: Hydroxynaphthalene reductase-like protein Arp2 (267 aa).

NADP(+) contacts are provided by isoleucine 25, asparagine 45, aspartate 71, and asparagine 98. Active-site proton donor residues include serine 147 and serine 148. NADP(+) contacts are provided by tyrosine 162, lysine 166, valine 195, and threonine 197. The active-site Proton acceptor is the tyrosine 162. Catalysis depends on lysine 166, which acts as the Lowers pKa of active site Tyr.

Belongs to the short-chain dehydrogenases/reductases (SDR) family.

Hydroxynaphthalene reductase-like protein; part of the Pks2 gene cluster that mediates the formation of infectious structures (appressoria), enabling these fungi to kill insects faster. The product of the Pks2 gene cluster is different from the one of Pks1 and has still not been identified. This chain is Hydroxynaphthalene reductase-like protein Arp2, found in Metarhizium brunneum (strain ARSEF 3297).